A 392-amino-acid polypeptide reads, in one-letter code: Iripin-1 (392 aa).

A signal peptide spans 1–16; that stretch reads MKPLVPLLFLLVSCRA. 3 N-linked (GlcNAc...) asparagine glycosylation sites follow: Asn104, Asn196, and Asn265.

Belongs to the serpin family. As to quaternary structure, interacts with human KLKB1. Interacts with human ST14. Interacts with human PLG (plasmin). In terms of tissue distribution, highly expressed in salivary gland. Expressed in midgut and ovary.

The protein resides in the secreted. In terms of biological role, serine protease inhibitor that modulates blood feeding of ticks on vertebrate species. Modestly inhibits human trypsin, plasma kallikrein (KLKB1), matriptase (ST14) and plasmin (PLG) via a classic serpin inhibitory mechanism. Modestly reduces enzymatic activity of human alpha-chymotrypsin, coagulation factor Xa (F10), factor XIIa (F12), cathepsin G (CTSG), tPA/tissue-type plasminogen activator (PLAT) and uPA/urokinase-type plasminogen activator (PLAU). Probably acts as a substrate rather than an inhibitor for the human neutrophil elastase (ELANE) and thus reduces its enzymatic activity in in vitro assays. Decreases expression of adhesion molecules VCAM1 and CD99 on the surface of human cells. Increases the production of chemokines for neutrophils and monocytes, such as KC/CXCL1, MIP-2/CXCL2 and MIP-1/CCL2, and anti-inflammatory cytokine IL10 in mouse inflammation models. Reduces the recruitment of mouse neutrophils and monocytes to the site of inflammation. Decreases expression of CXCR2 on the surface of mouse neutrophils. Increases expression of integrin ITGAM/ITGB2 on the surface of mouse neutrophils. The chain is Iripin-1 from Ixodes ricinus (Common tick).